We begin with the raw amino-acid sequence, 320 residues long: Methionyl-tRNA formyltransferase (320 aa).

114–117 contributes to the (6S)-5,6,7,8-tetrahydrofolate binding site; that stretch reads SLLP.

The protein belongs to the Fmt family.

The catalysed reaction is L-methionyl-tRNA(fMet) + (6R)-10-formyltetrahydrofolate = N-formyl-L-methionyl-tRNA(fMet) + (6S)-5,6,7,8-tetrahydrofolate + H(+). Functionally, attaches a formyl group to the free amino group of methionyl-tRNA(fMet). The formyl group appears to play a dual role in the initiator identity of N-formylmethionyl-tRNA by promoting its recognition by IF2 and preventing the misappropriation of this tRNA by the elongation apparatus. The chain is Methionyl-tRNA formyltransferase from Acinetobacter baumannii (strain SDF).